We begin with the raw amino-acid sequence, 23 residues long: Benzaldehyde dehydrogenase [NAD(+)] I (23 aa).

The protein belongs to the aldehyde dehydrogenase family. Homotetramer.

It carries out the reaction benzaldehyde + NAD(+) + H2O = benzoate + NADH + 2 H(+). The sequence is that of Benzaldehyde dehydrogenase [NAD(+)] I from Acinetobacter guillouiae (Acinetobacter genomosp. 11).